A 186-amino-acid polypeptide reads, in one-letter code: Casparian strip membrane protein 5 (186 aa).

The Cytoplasmic segment spans residues 1-25; the sequence is MKTDAIELGVAKDSTPIGGANRGVS. The helical transmembrane segment at 26-46 threads the bilayer; sequence ILDFILRLVALVGTLASAILM. The Extracellular portion of the chain corresponds to 47–73; that stretch reads GTTNETLPFATQFIRFRAEYDDLPTFT. N-linked (GlcNAc...) asparagine glycosylation is present at asparagine 50. A helical membrane pass occupies residues 74–94; it reads FFVVANIVVSGYLLLSLPLSI. Over 95–106 the chain is Cytoplasmic; that stretch reads VNIVRSTAKNRR. A helical transmembrane segment spans residues 107-127; it reads IILIIFDTAMLALLTAGASAA. Over 128-156 the chain is Extracellular; the sequence is AAIVYLAHKGNTRANWFAICQQFNSFCER. A helical membrane pass occupies residues 157–177; it reads ISGSLIGSFVGVAVFILLILM. The Cytoplasmic segment spans residues 178–186; the sequence is SASALSRRN.

It belongs to the Casparian strip membrane proteins (CASP) family. In terms of assembly, homodimer and heterodimers.

Its subcellular location is the cell membrane. Regulates membrane-cell wall junctions and localized cell wall deposition. Required for establishment of the Casparian strip membrane domain (CSD) and the subsequent formation of Casparian strips, a cell wall modification of the root endodermis that determines an apoplastic barrier between the intraorganismal apoplasm and the extraorganismal apoplasm and prevents lateral diffusion. This Ricinus communis (Castor bean) protein is Casparian strip membrane protein 5.